A 450-amino-acid chain; its full sequence is Keratin, type I cytoskeletal 25 (450 aa).

Positions 1–24 (MSLRLPSGSRRASPRPTTGSLRLS) are disordered. Residues 1-78 (MSLRLPSGSR…MNEGGLLSGN (78 aa)) form a head region. A coil 1A region spans residues 79–114 (EKVTMQNLNDRLASYLENVRALEEANADLEQKIKGW). The IF rod domain maps to 79-394 (EKVTMQNLND…LLIGGDDGAC (316 aa)). A linker 1 region spans residues 115-136 (YEKFGPGSCRGLDHDYSRYFPI). The coil 1B stretch occupies residues 137 to 228 (IEDLKNQIIA…KNHKEEMQVL (92 aa)). The interval 229 to 251 (QCAAGGNVNVEMNAAPGVDLTVL) is linker 12. The interval 252 to 390 (LNNMRAEYEA…ETYCLLIGGD (139 aa)) is coil 2. The interval 391 to 450 (DGACKSGGYKSKDYAAGNMGNQMKDPIKAIVVKKVLEEVDQRSKILTTRLHSLEEKSQSN) is tail. Serine 442 bears the Phosphoserine mark.

It belongs to the intermediate filament family. In terms of assembly, heterodimer of a type I and a type II keratin. Heterodimer with type II keratin KRT5 leading to the formation of keratin intermediate filament (KIF) network. Interacts with KRT6A to form filaments.

It localises to the cytoplasm. Functionally, essential for the proper assembly of type I and type II keratin protein complexes and formation of keratin intermediate filaments in the inner root sheath (irs). Plays a role in the cytoskeleton organization. This chain is Keratin, type I cytoskeletal 25, found in Capra hircus (Goat).